The sequence spans 145 residues: 3-hydroxyacyl-[acyl-carrier-protein] dehydratase FabZ (145 aa).

His51 is an active-site residue.

Belongs to the thioester dehydratase family. FabZ subfamily.

The protein localises to the cytoplasm. The catalysed reaction is a (3R)-hydroxyacyl-[ACP] = a (2E)-enoyl-[ACP] + H2O. Involved in unsaturated fatty acids biosynthesis. Catalyzes the dehydration of short chain beta-hydroxyacyl-ACPs and long chain saturated and unsaturated beta-hydroxyacyl-ACPs. This chain is 3-hydroxyacyl-[acyl-carrier-protein] dehydratase FabZ, found in Macrococcus caseolyticus (strain JCSC5402) (Macrococcoides caseolyticum).